The sequence spans 241 residues: 3-deoxy-manno-octulosonate cytidylyltransferase (241 aa).

This sequence belongs to the KdsB family.

It localises to the cytoplasm. The enzyme catalyses 3-deoxy-alpha-D-manno-oct-2-ulosonate + CTP = CMP-3-deoxy-beta-D-manno-octulosonate + diphosphate. It participates in nucleotide-sugar biosynthesis; CMP-3-deoxy-D-manno-octulosonate biosynthesis; CMP-3-deoxy-D-manno-octulosonate from 3-deoxy-D-manno-octulosonate and CTP: step 1/1. The protein operates within bacterial outer membrane biogenesis; lipopolysaccharide biosynthesis. Its function is as follows. Activates KDO (a required 8-carbon sugar) for incorporation into bacterial lipopolysaccharide in Gram-negative bacteria. This chain is 3-deoxy-manno-octulosonate cytidylyltransferase, found in Rickettsia typhi (strain ATCC VR-144 / Wilmington).